Reading from the N-terminus, the 198-residue chain is Small ribosomal subunit protein uS2 (198 aa).

The protein belongs to the universal ribosomal protein uS2 family.

The chain is Small ribosomal subunit protein uS2 from Methanobrevibacter smithii (strain ATCC 35061 / DSM 861 / OCM 144 / PS).